A 294-amino-acid chain; its full sequence is Lipoyl synthase 1 (294 aa).

7 residues coordinate [4Fe-4S] cluster: cysteine 38, cysteine 43, cysteine 49, cysteine 64, cysteine 68, cysteine 71, and serine 279. The Radical SAM core domain maps to 50-268 (FAGGTATFLI…EEGQTRFGFL (219 aa)).

This sequence belongs to the radical SAM superfamily. Lipoyl synthase family. Requires [4Fe-4S] cluster as cofactor.

Its subcellular location is the cytoplasm. The enzyme catalyses [[Fe-S] cluster scaffold protein carrying a second [4Fe-4S](2+) cluster] + N(6)-octanoyl-L-lysyl-[protein] + 2 oxidized [2Fe-2S]-[ferredoxin] + 2 S-adenosyl-L-methionine + 4 H(+) = [[Fe-S] cluster scaffold protein] + N(6)-[(R)-dihydrolipoyl]-L-lysyl-[protein] + 4 Fe(3+) + 2 hydrogen sulfide + 2 5'-deoxyadenosine + 2 L-methionine + 2 reduced [2Fe-2S]-[ferredoxin]. Its pathway is protein modification; protein lipoylation via endogenous pathway; protein N(6)-(lipoyl)lysine from octanoyl-[acyl-carrier-protein]: step 2/2. Catalyzes the radical-mediated insertion of two sulfur atoms into the C-6 and C-8 positions of the octanoyl moiety bound to the lipoyl domains of lipoate-dependent enzymes, thereby converting the octanoylated domains into lipoylated derivatives. The sequence is that of Lipoyl synthase 1 from Prochlorococcus marinus (strain SARG / CCMP1375 / SS120).